The following is a 374-amino-acid chain: uncharacterized protein (374 aa).

This is an uncharacterized protein from Methanocaldococcus jannaschii (strain ATCC 43067 / DSM 2661 / JAL-1 / JCM 10045 / NBRC 100440) (Methanococcus jannaschii).